The chain runs to 136 residues: Small ribosomal subunit protein eS17B (136 aa).

It belongs to the eukaryotic ribosomal protein eS17 family. In terms of assembly, component of the small ribosomal subunit (SSU). Mature yeast ribosomes consist of a small (40S) and a large (60S) subunit. The 40S small subunit contains 1 molecule of ribosomal RNA (18S rRNA) and 33 different proteins (encoded by 57 genes). The large 60S subunit contains 3 rRNA molecules (25S, 5.8S and 5S rRNA) and 46 different proteins (encoded by 81 genes).

The protein resides in the cytoplasm. Its function is as follows. Component of the ribosome, a large ribonucleoprotein complex responsible for the synthesis of proteins in the cell. The small ribosomal subunit (SSU) binds messenger RNAs (mRNAs) and translates the encoded message by selecting cognate aminoacyl-transfer RNA (tRNA) molecules. The large subunit (LSU) contains the ribosomal catalytic site termed the peptidyl transferase center (PTC), which catalyzes the formation of peptide bonds, thereby polymerizing the amino acids delivered by tRNAs into a polypeptide chain. The nascent polypeptides leave the ribosome through a tunnel in the LSU and interact with protein factors that function in enzymatic processing, targeting, and the membrane insertion of nascent chains at the exit of the ribosomal tunnel. The sequence is that of Small ribosomal subunit protein eS17B from Saccharomyces cerevisiae (strain ATCC 204508 / S288c) (Baker's yeast).